The chain runs to 90 residues: Bombyxin B-7 (90 aa).

An N-terminal signal peptide occupies residues 1-20 (MMKTSVMLMLVVVISLMCSG). 3 cysteine pairs are disulfide-bonded: Cys30-Cys76, Cys42-Cys89, and Cys75-Cys80. A propeptide spans 49–67 (GGAQYAPYFWTRQYLGSRG) (c peptide like).

The protein belongs to the insulin family. As to quaternary structure, heterodimer of a B chain and an A chain linked by two disulfide bonds.

The protein localises to the secreted. In terms of biological role, brain peptide responsible for activation of prothoracic glands to produce ecdysone in insects. This is Bombyxin B-7 (BBXB7) from Bombyx mori (Silk moth).